Reading from the N-terminus, the 80-residue chain is Protein CEBPZOS (80 aa).

The chain crosses the membrane as a helical span at residues 15–31 (GVLAAELVGVAGAYCLF).

It localises to the mitochondrion membrane. The polypeptide is Protein CEBPZOS (Mus musculus (Mouse)).